The following is a 292-amino-acid chain: Probable 2-(5''-triphosphoribosyl)-3'-dephosphocoenzyme-A synthase (292 aa).

It belongs to the CitG/MdcB family.

It catalyses the reaction 3'-dephospho-CoA + ATP = 2'-(5''-triphospho-alpha-D-ribosyl)-3'-dephospho-CoA + adenine. In terms of biological role, involved in the formation of 2-(5''-phosphoribosyl)-3'-dephosphocoenzyme-A, the prosthetic group of the acyl-carrier protein of the malonate decarboxylase. This chain is Probable 2-(5''-triphosphoribosyl)-3'-dephosphocoenzyme-A synthase, found in Azotobacter vinelandii (strain DJ / ATCC BAA-1303).